The sequence spans 289 residues: Phosphatidylglycerol--prolipoprotein diacylglyceryl transferase (289 aa).

A run of 7 helical transmembrane segments spans residues 23-43, 61-81, 99-119, 125-145, 199-219, 226-246, and 259-279; these read ALHWYGLMYLVGFVFAMWLAV, LLYMGFLGVFVGGRLGYVLFY, GGMSFHGGLMGVICVMLWFAH, FFQVADFIAPLIPFGLGAGRL, SQLYQMMLEGVALFIILNLFI, GSVSGLFLIGYGTFRIITEFF, and LFSMGQILSLPMVIAGILMMV. R144 is a binding site for a 1,2-diacyl-sn-glycero-3-phospho-(1'-sn-glycerol).

The protein belongs to the Lgt family.

It localises to the cell inner membrane. The enzyme catalyses L-cysteinyl-[prolipoprotein] + a 1,2-diacyl-sn-glycero-3-phospho-(1'-sn-glycerol) = an S-1,2-diacyl-sn-glyceryl-L-cysteinyl-[prolipoprotein] + sn-glycerol 1-phosphate + H(+). It functions in the pathway protein modification; lipoprotein biosynthesis (diacylglyceryl transfer). Catalyzes the transfer of the diacylglyceryl group from phosphatidylglycerol to the sulfhydryl group of the N-terminal cysteine of a prolipoprotein, the first step in the formation of mature lipoproteins. This chain is Phosphatidylglycerol--prolipoprotein diacylglyceryl transferase, found in Pectobacterium carotovorum subsp. carotovorum (strain PC1).